Consider the following 99-residue polypeptide: DNA-binding protein Fis (99 aa).

Positions Gln75–Lys94 form a DNA-binding region, H-T-H motif.

This sequence belongs to the transcriptional regulatory Fis family. In terms of assembly, homodimer.

Functionally, activates ribosomal RNA transcription. Plays a direct role in upstream activation of rRNA promoters. The polypeptide is DNA-binding protein Fis (Buchnera aphidicola subsp. Schizaphis graminum (strain Sg)).